The following is a 148-amino-acid chain: Nucleoside diphosphate kinase (148 aa).

ATP contacts are provided by Lys-9, Phe-57, Arg-85, Thr-91, Arg-102, and Asn-112. Thr-91 carries the phosphothreonine modification. His-115 serves as the catalytic Pros-phosphohistidine intermediate. Residue Ser-122 is modified to Phosphoserine.

Belongs to the NDK family. Homotetramer. Mg(2+) is required as a cofactor.

Its subcellular location is the cytoplasm. It carries out the reaction a 2'-deoxyribonucleoside 5'-diphosphate + ATP = a 2'-deoxyribonucleoside 5'-triphosphate + ADP. The enzyme catalyses a ribonucleoside 5'-diphosphate + ATP = a ribonucleoside 5'-triphosphate + ADP. Major role in the synthesis of nucleoside triphosphates other than ATP. The ATP gamma phosphate is transferred to the NDP beta phosphate via a ping-pong mechanism, using a phosphorylated active-site intermediate. This is Nucleoside diphosphate kinase from Bacillus licheniformis (strain ATCC 14580 / DSM 13 / JCM 2505 / CCUG 7422 / NBRC 12200 / NCIMB 9375 / NCTC 10341 / NRRL NRS-1264 / Gibson 46).